The chain runs to 478 residues: Protein nucleotidyltransferase YdiU (478 aa).

ATP contacts are provided by G84, G86, R87, K107, D119, G120, R170, and R177. The active-site Proton acceptor is the D246. Residues N247 and D256 each coordinate Mg(2+). D256 contacts ATP.

This sequence belongs to the SELO family. The cofactor is Mg(2+). Mn(2+) is required as a cofactor.

The enzyme catalyses L-seryl-[protein] + ATP = 3-O-(5'-adenylyl)-L-seryl-[protein] + diphosphate. The catalysed reaction is L-threonyl-[protein] + ATP = 3-O-(5'-adenylyl)-L-threonyl-[protein] + diphosphate. It carries out the reaction L-tyrosyl-[protein] + ATP = O-(5'-adenylyl)-L-tyrosyl-[protein] + diphosphate. It catalyses the reaction L-histidyl-[protein] + UTP = N(tele)-(5'-uridylyl)-L-histidyl-[protein] + diphosphate. The enzyme catalyses L-seryl-[protein] + UTP = O-(5'-uridylyl)-L-seryl-[protein] + diphosphate. The catalysed reaction is L-tyrosyl-[protein] + UTP = O-(5'-uridylyl)-L-tyrosyl-[protein] + diphosphate. Its function is as follows. Nucleotidyltransferase involved in the post-translational modification of proteins. It can catalyze the addition of adenosine monophosphate (AMP) or uridine monophosphate (UMP) to a protein, resulting in modifications known as AMPylation and UMPylation. The chain is Protein nucleotidyltransferase YdiU from Escherichia coli (strain SE11).